Consider the following 97-residue polypeptide: Aspartyl/glutamyl-tRNA(Asn/Gln) amidotransferase subunit C (97 aa).

Belongs to the GatC family. Heterotrimer of A, B and C subunits.

The catalysed reaction is L-glutamyl-tRNA(Gln) + L-glutamine + ATP + H2O = L-glutaminyl-tRNA(Gln) + L-glutamate + ADP + phosphate + H(+). It carries out the reaction L-aspartyl-tRNA(Asn) + L-glutamine + ATP + H2O = L-asparaginyl-tRNA(Asn) + L-glutamate + ADP + phosphate + 2 H(+). Allows the formation of correctly charged Asn-tRNA(Asn) or Gln-tRNA(Gln) through the transamidation of misacylated Asp-tRNA(Asn) or Glu-tRNA(Gln) in organisms which lack either or both of asparaginyl-tRNA or glutaminyl-tRNA synthetases. The reaction takes place in the presence of glutamine and ATP through an activated phospho-Asp-tRNA(Asn) or phospho-Glu-tRNA(Gln). The polypeptide is Aspartyl/glutamyl-tRNA(Asn/Gln) amidotransferase subunit C (Prochlorococcus marinus (strain MIT 9313)).